We begin with the raw amino-acid sequence, 172 residues long: Protein-export protein SecB (172 aa).

It belongs to the SecB family. In terms of assembly, homotetramer, a dimer of dimers. One homotetramer interacts with 1 SecA dimer.

The protein resides in the cytoplasm. Its function is as follows. One of the proteins required for the normal export of preproteins out of the cell cytoplasm. It is a molecular chaperone that binds to a subset of precursor proteins, maintaining them in a translocation-competent state. It also specifically binds to its receptor SecA. The chain is Protein-export protein SecB from Stenotrophomonas maltophilia (strain K279a).